The primary structure comprises 367 residues: Histidinol-phosphate aminotransferase (367 aa).

At K221 the chain carries N6-(pyridoxal phosphate)lysine.

The protein belongs to the class-II pyridoxal-phosphate-dependent aminotransferase family. Histidinol-phosphate aminotransferase subfamily. Homodimer. It depends on pyridoxal 5'-phosphate as a cofactor.

The catalysed reaction is L-histidinol phosphate + 2-oxoglutarate = 3-(imidazol-4-yl)-2-oxopropyl phosphate + L-glutamate. The protein operates within amino-acid biosynthesis; L-histidine biosynthesis; L-histidine from 5-phospho-alpha-D-ribose 1-diphosphate: step 7/9. The polypeptide is Histidinol-phosphate aminotransferase (Paracoccus denitrificans (strain Pd 1222)).